The primary structure comprises 179 residues: tRNA (cytidine(56)-2'-O)-methyltransferase (179 aa).

S-adenosyl-L-methionine is bound by residues leucine 82, 110–114 (GAEKV), and 128–135 (VGNQPHSE).

Belongs to the aTrm56 family. As to quaternary structure, homodimer.

It localises to the cytoplasm. The enzyme catalyses cytidine(56) in tRNA + S-adenosyl-L-methionine = 2'-O-methylcytidine(56) in tRNA + S-adenosyl-L-homocysteine + H(+). Its function is as follows. Specifically catalyzes the AdoMet-dependent 2'-O-ribose methylation of cytidine at position 56 in tRNAs. The protein is tRNA (cytidine(56)-2'-O)-methyltransferase of Methanocaldococcus jannaschii (strain ATCC 43067 / DSM 2661 / JAL-1 / JCM 10045 / NBRC 100440) (Methanococcus jannaschii).